The primary structure comprises 236 residues: Small ribosomal subunit protein uS3 (236 aa).

One can recognise a KH type-2 domain in the interval 39–107 (IREFLTEELK…DTSLNIVEVR (69 aa)). The tract at residues 214–236 (ASERRAVEGDNQGSSSNRRRENA) is disordered.

Belongs to the universal ribosomal protein uS3 family. In terms of assembly, part of the 30S ribosomal subunit. Forms a tight complex with proteins S10 and S14.

Its function is as follows. Binds the lower part of the 30S subunit head. Binds mRNA in the 70S ribosome, positioning it for translation. In Brucella abortus (strain S19), this protein is Small ribosomal subunit protein uS3.